Consider the following 613-residue polypeptide: Nuclear receptor subfamily 1 group D member 1 (613 aa).

A compositionally biased stretch (polar residues) spans Met1–Cys48. Positions Met1–Ser70 are required for phosphorylation by CSNK1E and cytoplasmic localization. Positions Met1 to Gly102 are disordered. Residues Met1–Met129 are modulating. Residues Pro49–Thr285 form a crucial for activation of GJA1 region. A phosphoserine; by GSK3-beta mark is found at Ser55 and Ser59. Residues Gly69–Gly102 are compositionally biased toward low complexity. Positions Val130–Phe206 form a DNA-binding region, nuclear receptor. 2 consecutive NR C4-type zinc fingers follow at residues Cys133–Cys153 and Cys170–Cys194. N6-acetyllysine; by KAT5 is present on residues Lys192 and Lys193. The tract at residues Ser233 to Val286 is disordered. The span at Glu239–Ser262 shows a compositional bias: pro residues. Thr275 is subject to Phosphothreonine; by CDK1. The NR LBD domain maps to Thr285–Gln613. Cys417 contacts heme. The residue at position 590 (Lys590) is an N6-acetyllysine. His601 contacts heme.

Belongs to the nuclear hormone receptor family. NR1 subfamily. In terms of assembly, binds DNA as a monomer or a homodimer. Interacts with C1D, SP1 and ZNHIT1. Interacts with OPHN1 (via C-terminus). Interacts with PER2; the interaction associates PER2 to BMAL1 promoter region. Interacts with CRY1. Interacts with CCAR2. Interacts with NR2E3. Interacts with SIAH2. Interacts with FBXW7 and CDK1. Interacts with HUWE1. Interacts with NR0B2. Interacts with NFIL3. Interacts (via domain NR LBD) with HSP90AA1 and HSP90AB1. Post-translationally, ubiquitinated, leading to its proteasomal degradation. Ubiquitinated by the SCF(FBXW7) complex when phosphorylated by CDK1 leading to its proteasomal degradation. Ubiquitinated by SIAH2; leading to its proteasomal degradation. Rapidly ubiquitinated in response to inflammatory triggers and sumoylation is a prerequisite to its ubiquitination. In terms of processing, sumoylated by UBE2I, desumoylated by SENP1, and sumoylation is a prerequisite to its ubiquitination. Phosphorylated by CSNK1E; phosphorylation enhances its cytoplasmic localization. Post-translationally, undergoes lysosome-mediated degradation in a time-dependent manner in the liver. As to expression, expressed in all tissues and cell lines examined. Expressed at high levels in some squamous carcinoma cell lines.

It is found in the nucleus. Its subcellular location is the cytoplasm. The protein resides in the cell projection. The protein localises to the dendrite. It localises to the dendritic spine. Transcriptional repressor which coordinates circadian rhythm and metabolic pathways in a heme-dependent manner. Integral component of the complex transcription machinery that governs circadian rhythmicity and forms a critical negative limb of the circadian clock by directly repressing the expression of core clock components BMAL1, CLOCK and CRY1. Also regulates genes involved in metabolic functions, including lipid and bile acid metabolism, adipogenesis, gluconeogenesis and the macrophage inflammatory response. Acts as a receptor for heme which stimulates its interaction with the NCOR1/HDAC3 corepressor complex, enhancing transcriptional repression. Recognizes two classes of DNA response elements within the promoter of its target genes and can bind to DNA as either monomers or homodimers, depending on the nature of the response element. Binds as a monomer to a response element composed of the consensus half-site motif 5'-[A/G]GGTCA-3' preceded by an A/T-rich 5' sequence (RevRE), or as a homodimer to a direct repeat of the core motif spaced by two nucleotides (RevDR-2). Acts as a potent competitive repressor of ROR alpha (RORA) function and regulates the levels of its ligand heme by repressing the expression of PPARGC1A, a potent inducer of heme synthesis. Regulates lipid metabolism by repressing the expression of APOC3 and by influencing the activity of sterol response element binding proteins (SREBPs); represses INSIG2 which interferes with the proteolytic activation of SREBPs which in turn govern the rhythmic expression of enzymes with key functions in sterol and fatty acid synthesis. Regulates gluconeogenesis via repression of G6PC1 and PEPCK and adipocyte differentiation via repression of PPARG. Regulates glucagon release in pancreatic alpha-cells via the AMPK-NAMPT-SIRT1 pathway and the proliferation, glucose-induced insulin secretion and expression of key lipogenic genes in pancreatic-beta cells. Positively regulates bile acid synthesis by increasing hepatic expression of CYP7A1 via repression of NR0B2 and NFIL3 which are negative regulators of CYP7A1. Modulates skeletal muscle oxidative capacity by regulating mitochondrial biogenesis and autophagy; controls mitochondrial biogenesis and respiration by interfering with the STK11-PRKAA1/2-SIRT1-PPARGC1A signaling pathway. Represses the expression of SERPINE1/PAI1, an important modulator of cardiovascular disease and the expression of inflammatory cytokines and chemokines in macrophages. Represses gene expression at a distance in macrophages by inhibiting the transcription of enhancer-derived RNAs (eRNAs). Plays a role in the circadian regulation of body temperature and negatively regulates thermogenic transcriptional programs in brown adipose tissue (BAT); imposes a circadian oscillation in BAT activity, increasing body temperature when awake and depressing thermogenesis during sleep. In concert with NR2E3, regulates transcriptional networks critical for photoreceptor development and function. In addition to its activity as a repressor, can also act as a transcriptional activator. In the ovarian granulosa cells acts as a transcriptional activator of STAR which plays a role in steroid biosynthesis. In collaboration with SP1, activates GJA1 transcription in a heme-independent manner. Represses the transcription of CYP2B10, CYP4A10 and CYP4A14. Represses the transcription of CES2. Represses and regulates the circadian expression of TSHB in a NCOR1-dependent manner. Negatively regulates the protein stability of NR3C1 and influences the time-dependent subcellular distribution of NR3C1, thereby affecting its transcriptional regulatory activity. Plays a critical role in the circadian control of neutrophilic inflammation in the lung; under resting, non-stress conditions, acts as a rhythmic repressor to limit inflammatory activity whereas in the presence of inflammatory triggers undergoes ubiquitin-mediated degradation thereby relieving inhibition of the inflammatory response. Plays a key role in the circadian regulation of microglial activation and neuroinflammation; suppresses microglial activation through the NF-kappaB pathway in the central nervous system. Plays a role in the regulation of the diurnal rhythms of lipid and protein metabolism in the skeletal muscle via transcriptional repression of genes controlling lipid and amino acid metabolism in the muscle. The sequence is that of Nuclear receptor subfamily 1 group D member 1 (NR1D1) from Bos taurus (Bovine).